Here is an 89-residue protein sequence, read N- to C-terminus: LYR motif-containing protein 4 (89 aa).

Belongs to the complex I LYR family.

Its subcellular location is the mitochondrion. The protein localises to the nucleus. It functions in the pathway cofactor biosynthesis; iron-sulfur cluster biosynthesis. Functionally, required for nuclear and mitochondrial iron-sulfur protein biosynthesis. The chain is LYR motif-containing protein 4 (lyrm4) from Xenopus laevis (African clawed frog).